The primary structure comprises 285 residues: Pantothenate synthetase (285 aa).

30-37 is an ATP binding site; the sequence is MGNLHDGH. The Proton donor role is filled by H37. Q61 is a (R)-pantoate binding site. Q61 contributes to the beta-alanine binding site. 149–152 lines the ATP pocket; that stretch reads GEKD. (R)-pantoate is bound at residue Q155. ATP is bound by residues I178 and 186-189; that span reads LSSR.

It belongs to the pantothenate synthetase family. As to quaternary structure, homodimer.

It is found in the cytoplasm. It carries out the reaction (R)-pantoate + beta-alanine + ATP = (R)-pantothenate + AMP + diphosphate + H(+). It functions in the pathway cofactor biosynthesis; (R)-pantothenate biosynthesis; (R)-pantothenate from (R)-pantoate and beta-alanine: step 1/1. Catalyzes the condensation of pantoate with beta-alanine in an ATP-dependent reaction via a pantoyl-adenylate intermediate. This Buchnera aphidicola subsp. Acyrthosiphon pisum (strain 5A) protein is Pantothenate synthetase.